A 409-amino-acid chain; its full sequence is Putative integrase/recombinase y4rA (409 aa).

Positions 112–197 constitute a Core-binding (CB) domain; the sequence is SAVEQHVQAY…ALRSFLSYAR (86 aa). Residues 220–402 form the Tyr recombinase domain; the sequence is SIPRAIGRDD…DLDALRTLAL (183 aa). Active-site residues include Arg-260, Lys-284, His-354, Arg-357, and His-380. Tyr-389 functions as the O-(3'-phospho-DNA)-tyrosine intermediate in the catalytic mechanism.

The protein belongs to the 'phage' integrase family.

This is Putative integrase/recombinase y4rA from Sinorhizobium fredii (strain NBRC 101917 / NGR234).